The following is a 237-amino-acid chain: UPF0173 metal-dependent hydrolase BOV_A0561 (237 aa).

The protein belongs to the UPF0173 family.

This Brucella ovis (strain ATCC 25840 / 63/290 / NCTC 10512) protein is UPF0173 metal-dependent hydrolase BOV_A0561.